Here is a 278-residue protein sequence, read N- to C-terminus: Transcription initiation factor TFIID subunit 9 (278 aa).

The tract at residues 193 to 278 is disordered; the sequence is TTTKTVGSSG…EEEEFEFVTN (86 aa). The segment covering 200–210 has biased composition (gly residues); sequence SSGGSGGGGGQ. Residues 231-240 show a composition bias toward low complexity; sequence AAAVGSIAGA. Positions 241-259 are enriched in gly residues; it reads SGSGAGSASGGGGGGGSSG. A compositionally biased stretch (acidic residues) spans 269–278; that stretch reads EEEEFEFVTN.

It belongs to the TAF9 family. In terms of assembly, belongs to the TFIID complex which is composed of TATA binding protein (Tbp) and a number of TBP-associated factors (TAFs). Taf9 and Taf6 exist as a heterotetramer. Interacts with e(y)2.

The protein resides in the nucleus. TFIID is a multimeric protein complex that plays a central role in mediating promoter responses to various activators and repressors. This Drosophila melanogaster (Fruit fly) protein is Transcription initiation factor TFIID subunit 9.